The chain runs to 600 residues: Aspartate--tRNA(Asp/Asn) ligase (600 aa).

E187 provides a ligand contact to L-aspartate. Positions 211–214 are aspartate; that stretch reads QIFK. L-aspartate contacts are provided by R233 and H463. 233–235 is a binding site for ATP; that stretch reads RDE. ATP is bound at residue E497. R504 is an L-aspartate binding site. Residue 549-552 participates in ATP binding; it reads GVDR.

The protein belongs to the class-II aminoacyl-tRNA synthetase family. Type 1 subfamily. As to quaternary structure, homodimer.

The protein localises to the cytoplasm. It carries out the reaction tRNA(Asx) + L-aspartate + ATP = L-aspartyl-tRNA(Asx) + AMP + diphosphate. Its function is as follows. Aspartyl-tRNA synthetase with relaxed tRNA specificity since it is able to aspartylate not only its cognate tRNA(Asp) but also tRNA(Asn). Reaction proceeds in two steps: L-aspartate is first activated by ATP to form Asp-AMP and then transferred to the acceptor end of tRNA(Asp/Asn). This Wolbachia pipientis subsp. Culex pipiens (strain wPip) protein is Aspartate--tRNA(Asp/Asn) ligase.